Here is a 519-residue protein sequence, read N- to C-terminus: 2-isopropylmalate synthase (519 aa).

One can recognise a Pyruvate carboxyltransferase domain in the interval 5–267 (VIIFDTTLRD…YTNIHHHEIY (263 aa)). Residues aspartate 14, histidine 202, histidine 204, and asparagine 238 each contribute to the Mn(2+) site. The regulatory domain stretch occupies residues 392 to 519 (ALESFHIHST…NHKNTQHIKK (128 aa)).

The protein belongs to the alpha-IPM synthase/homocitrate synthase family. LeuA type 1 subfamily. Homodimer. It depends on Mn(2+) as a cofactor.

Its subcellular location is the cytoplasm. It catalyses the reaction 3-methyl-2-oxobutanoate + acetyl-CoA + H2O = (2S)-2-isopropylmalate + CoA + H(+). The protein operates within amino-acid biosynthesis; L-leucine biosynthesis; L-leucine from 3-methyl-2-oxobutanoate: step 1/4. Its function is as follows. Catalyzes the condensation of the acetyl group of acetyl-CoA with 3-methyl-2-oxobutanoate (2-ketoisovalerate) to form 3-carboxy-3-hydroxy-4-methylpentanoate (2-isopropylmalate). This Blochmanniella floridana protein is 2-isopropylmalate synthase.